A 98-amino-acid polypeptide reads, in one-letter code: Integration host factor subunit beta (98 aa).

It belongs to the bacterial histone-like protein family. As to quaternary structure, heterodimer of an alpha and a beta chain.

Its function is as follows. This protein is one of the two subunits of integration host factor, a specific DNA-binding protein that functions in genetic recombination as well as in transcriptional and translational control. This chain is Integration host factor subunit beta, found in Marinobacter nauticus (strain ATCC 700491 / DSM 11845 / VT8) (Marinobacter aquaeolei).